The chain runs to 84 residues: Large ribosomal subunit protein bL27 (84 aa).

Positions 1-21 are disordered; it reads MAHKKGGGSTKNGRDSNPKYL.

This sequence belongs to the bacterial ribosomal protein bL27 family.

The sequence is that of Large ribosomal subunit protein bL27 from Pelodictyon phaeoclathratiforme (strain DSM 5477 / BU-1).